Consider the following 154-residue polypeptide: Prefoldin subunit 5 (154 aa).

A2 carries the N-acetylalanine modification. The residue at position 42 (K42) is an N6-acetyllysine. S56 bears the Phosphoserine mark.

The protein belongs to the prefoldin subunit alpha family. In terms of assembly, heterohexamer of two PFD-alpha type and four PFD-beta type subunits.

It localises to the nucleus. Its function is as follows. Binds specifically to cytosolic chaperonin (c-CPN) and transfers target proteins to it. Binds to nascent polypeptide chain and promotes folding in an environment in which there are many competing pathways for nonnative proteins. Represses the transcriptional activity of MYC. In Mus musculus (Mouse), this protein is Prefoldin subunit 5 (Pfdn5).